The chain runs to 329 residues: Interferon regulatory factor 1 (329 aa).

The IRF tryptophan pentad repeat DNA-binding region spans 5 to 113 (RMRMRPWLEM…SAVRVYRMLP (109 aa)). K78 is modified (N6-acetyllysine). The disordered stretch occupies residues 93-166 (EVKDQSRNKG…LPDDHSSYTT (74 aa)). Over residues 146-166 (DTFSDGLSSSTLPDDHSSYTT) the composition is skewed to polar residues. Residues K276 and K300 each participate in a glycyl lysine isopeptide (Lys-Gly) (interchain with G-Cter in SUMO) cross-link.

The protein belongs to the IRF family. In terms of assembly, monomer. Homodimer. Interacts with EP300. Interacts with MYD88. Interacts with PIAS3. Interacts with SPOP. Phosphorylated by CK2 and this positively regulates its activity. In terms of processing, ubiquitinated in a SPOP-depedent manner. Sumoylation represses the transcriptional activity and displays enhanced resistance to protein degradation. Sumoylated by UBE2I/UBC9 and SUMO1. Inactivates the tumor suppressor activity. Elevated levels in tumor cells. Major site is Lys-276. Sumoylation is enhanced by PIAS3. Desumoylated by SENP1 in tumor cells and appears to compete with ubiquitination on C-terminal sites. Post-translationally, ubiquitinated. Appears to compete with sumoylation on C-terminal sites.

Its subcellular location is the nucleus. It is found in the cytoplasm. Its activity is regulated as follows. Activated by MYD88. Its function is as follows. Transcriptional regulator which displays a remarkable functional diversity in the regulation of cellular responses. Regulates transcription of IFN and IFN-inducible genes, host response to viral and bacterial infections, regulation of many genes expressed during hematopoiesis, inflammation, immune responses and cell proliferation and differentiation, regulation of the cell cycle and induction of growth arrest and programmed cell death following DNA damage. Stimulates both innate and acquired immune responses through the activation of specific target genes and can act as a transcriptional activator and repressor regulating target genes by binding to an interferon-stimulated response element (ISRE) in their promoters. Has an essentail role in IFNG-dependent immunity to mycobacteria. Binds to a consensus sequence in gene promoters. Its target genes for transcriptional activation activity are: genes involved in anti-viral response, such as IFN-alpha/beta, RIGI, TNFSF10/TRAIL, ZBP1, OAS1/2, PIAS1/GBP, EIF2AK2/PKR and RSAD2/viperin; antibacterial response, such as GBP2, GBP5, IRGB10 and NOS2/INOS; anti-proliferative response, such as p53/TP53, LOX and CDKN1A; apoptosis, such as BBC3/PUMA, CASP1, CASP7 and CASP8; immune response, such as IL7, IL12A/B and IL15, PTGS2/COX2 and CYBB; DNA damage responses and DNA repair, such as POLQ/POLH; MHC class I expression, such as TAP1, PSMB9/LMP2, PSME1/PA28A, PSME2/PA28B and B2M and MHC class II expression, such as CIITA; metabolic enzymes, such as ACOD1/IRG1. Represses genes involved in anti-proliferative response, such as BIRC5/survivin, CCNB1, CCNE1, CDK1, CDK2 and CDK4 and in immune response, such as FOXP3, IL4, ANXA2 and TLR4. Stimulates p53/TP53-dependent transcription through enhanced recruitment of EP300 leading to increased acetylation of p53/TP53. Plays an important role in immune response directly affecting NK maturation and activity, macrophage production of IL12, Th1 development and maturation of CD8+ T-cells. Also implicated in the differentiation and maturation of dendritic cells and in the suppression of regulatory T (Treg) cells development. Acts as a tumor suppressor and plays a role not only in antagonism of tumor cell growth but also in stimulating an immune response against tumor cells. The protein is Interferon regulatory factor 1 (Irf1) of Mus musculus (Mouse).